We begin with the raw amino-acid sequence, 279 residues long: Calcium-activated potassium channel subunit beta-3 (279 aa).

At 1 to 60 (MDFSPSSELGFHFVAFILLTRHRTAFPASGKKRETDYSDGDPLDVHKRLPSSAGEDRAVM) the chain is on the cytoplasmic side. The helical transmembrane segment at 61-81 (LGFAMMGFSVLMFFLLGTTIL) threads the bilayer. The Extracellular portion of the chain corresponds to 82–207 (KPFMLSIQRE…DVILIKKYDQ (126 aa)). Asn131 carries an N-linked (GlcNAc...) asparagine glycan. A helical membrane pass occupies residues 208–228 (MAIFHCLFWPSLTLLGGALIV). Over 229–279 (GMVRLTQHLSLLCEKYSTVVRDEVGGKVPYIEQHQFKLCIMRRSKGRAEKS) the chain is Cytoplasmic.

The protein belongs to the KCNMB (TC 8.A.14.1) family. KCNMB3 subfamily. In terms of assembly, interacts with KCNMA1 tetramer. There are probably 4 molecules of KCMNB3 per KCNMA1 tetramer. N-glycosylated. In terms of processing, the extracellular domain contains disulfide bond essential for the gating mechanism. In terms of tissue distribution, isoform 1, isoform 3 and isoform 4 are widely expressed. Isoform 2 is expressed placenta, pancreas, kidney and heart. Isoform 1 and isoform 3 are highly expressed in pancreas and testis.

It is found in the membrane. Regulatory subunit of the calcium activated potassium KCNMA1 (maxiK) channel. Modulates the calcium sensitivity and gating kinetics of KCNMA1, thereby contributing to KCNMA1 channel diversity. Alters the functional properties of the current expressed by the KCNMA1 channel. Isoform 2, isoform 3 and isoform 4 partially inactivate the current of KCNBMA. Isoform 4 induces a fast and incomplete inactivation of KCNMA1 channel that is detectable only at large depolarizations. In contrast, isoform 1 does not induce detectable inactivation of KCNMA1. Two or more subunits of KCNMB3 are required to block the KCNMA1 tetramer. In Homo sapiens (Human), this protein is Calcium-activated potassium channel subunit beta-3 (KCNMB3).